The chain runs to 41 residues: Bacteriocin (41 aa).

A disulfide bridge links Cys-9 with Cys-14.

The protein resides in the secreted. Bacteriocin active against S.aureus, S.typhi, B.thuringiensis, Klebsiella sp., E.coli KL16 and E.coli Gj137. This chain is Bacteriocin, found in Lactococcus sp.